A 42-amino-acid polypeptide reads, in one-letter code: uncharacterized protein (42 aa).

Its subcellular location is the plastid. The protein resides in the chloroplast. This is an uncharacterized protein from Diacronema lutheri (Unicellular marine alga).